We begin with the raw amino-acid sequence, 400 residues long: Enoyl-[acyl-carrier-protein] reductase [NADH] (400 aa).

NAD(+)-binding positions include 48 to 53, 74 to 75, 111 to 112, and 139 to 140; these read GSSSGY, FE, DA, and LA. A substrate-binding site is contributed by Tyr-225. The active-site Proton donor is Tyr-235. NAD(+) is bound by residues Lys-244 and 273-275; that span reads VVT.

This sequence belongs to the TER reductase family. Monomer.

The catalysed reaction is a 2,3-saturated acyl-[ACP] + NAD(+) = a (2E)-enoyl-[ACP] + NADH + H(+). Its pathway is lipid metabolism; fatty acid biosynthesis. In terms of biological role, involved in the final reduction of the elongation cycle of fatty acid synthesis (FAS II). Catalyzes the reduction of a carbon-carbon double bond in an enoyl moiety that is covalently linked to an acyl carrier protein (ACP). The sequence is that of Enoyl-[acyl-carrier-protein] reductase [NADH] from Aliivibrio fischeri (strain MJ11) (Vibrio fischeri).